We begin with the raw amino-acid sequence, 243 residues long: Probable transcriptional regulatory protein Bpet3099 (243 aa).

The disordered stretch occupies residues 1–21 (MAGHSKWANIQHRKGRQDAKR).

Belongs to the TACO1 family.

It localises to the cytoplasm. This chain is Probable transcriptional regulatory protein Bpet3099, found in Bordetella petrii (strain ATCC BAA-461 / DSM 12804 / CCUG 43448).